Here is a 166-residue protein sequence, read N- to C-terminus: Phospholipase A2 inhibitor (166 aa).

An N-terminal signal peptide occupies residues 1-19; that stretch reads MRLILLSGLLLLGIFLANG. Residues 46–161 enclose the C-type lectin domain; sequence LKGSFLIVHK…CDDNLLVVCE (116 aa). Disulfide bonds link Cys83–Cys160 and Cys138–Cys152. A glycan (N-linked (GlcNAc...) asparagine) is linked at Asn122.

Belongs to the alpha-type phospholipase A2 inhibitor family. In terms of assembly, homotrimer; non-covalently linked. In terms of tissue distribution, expressed by the liver.

Its subcellular location is the secreted. In terms of biological role, this phospholipase A2 inhibitor binds directly phospholipase A2 in the presence or absence of calcium. This chain is Phospholipase A2 inhibitor, found in Bothrops jararacussu (Jararacussu).